The chain runs to 64 residues: Large ribosomal subunit protein bL35 (64 aa).

It belongs to the bacterial ribosomal protein bL35 family.

The chain is Large ribosomal subunit protein bL35 from Pseudomonas entomophila (strain L48).